Consider the following 503-residue polypeptide: DGEQALQASLSVKEKLQIALCLEKSGVDIMEVGFPISSPGDFKSVQTISQKIKNSRVCSLARCIEKDIDVAGEAMSASNSFRIHIFLATSTLHMESKLRKNFNEIIDMAIFSVKRALRYTDDIEFSCEDASRTTIDNLCRIVEKLISCGVKTINIPDTVGYTIPNELSFIIKNLFEKVPNIHKSTISVHCHDDLGMAVGNSISAIQAGARQIEGTINGIGERAGNTALEEVIMAIKVREDILGVSTNINHKEIYRTSQIVSSICNMPIPSNKAIVGSNAFAHSSGIHQDGVLKNRENYEIIDPISIGLKKVKLNLTSRSGRAAVKHYMNEMGYKENDYNIDELYTDFLKLADKKGQVFDYDLEALAFINKQQDESEYFSLKFFSVQSISNNLSTASVTLLCGKKIYTEASTTSNGPVDAIYQALNRITHFPIVLQKFQLVAKGKGKDALGQVDILVEYKKRKFHGVGLATDIMESSAKAMVNVLNNIWKAKQVNKNLKNLKKQ.

Mn(2+) contacts are provided by Asp-1, His-189, His-191, and Asn-225. The Pyruvate carboxyltransferase domain maps to 1-254 (DGEQALQASL…STNINHKEIY (254 aa)). The interval 379–503 (SLKFFSVQSI…NKNLKNLKKQ (125 aa)) is regulatory domain.

Belongs to the alpha-IPM synthase/homocitrate synthase family. LeuA type 1 subfamily. In terms of assembly, homodimer. It depends on Mn(2+) as a cofactor.

The protein localises to the cytoplasm. It catalyses the reaction 3-methyl-2-oxobutanoate + acetyl-CoA + H2O = (2S)-2-isopropylmalate + CoA + H(+). It participates in amino-acid biosynthesis; L-leucine biosynthesis; L-leucine from 3-methyl-2-oxobutanoate: step 1/4. Its function is as follows. Catalyzes the condensation of the acetyl group of acetyl-CoA with 3-methyl-2-oxobutanoate (2-ketoisovalerate) to form 3-carboxy-3-hydroxy-4-methylpentanoate (2-isopropylmalate). In Buchnera aphidicola subsp. Uroleucon ambrosiae, this protein is 2-isopropylmalate synthase.